We begin with the raw amino-acid sequence, 126 residues long: Aspartate 1-decarboxylase (126 aa).

The active-site Schiff-base intermediate with substrate; via pyruvic acid is Ser-25. Residue Ser-25 is modified to Pyruvic acid (Ser). Residue Thr-57 participates in substrate binding. Residue Tyr-58 is the Proton donor of the active site. Position 73–75 (73–75 (GAA)) interacts with substrate.

Belongs to the PanD family. As to quaternary structure, heterooctamer of four alpha and four beta subunits. Requires pyruvate as cofactor. Is synthesized initially as an inactive proenzyme, which is activated by self-cleavage at a specific serine bond to produce a beta-subunit with a hydroxyl group at its C-terminus and an alpha-subunit with a pyruvoyl group at its N-terminus.

It localises to the cytoplasm. It carries out the reaction L-aspartate + H(+) = beta-alanine + CO2. It participates in cofactor biosynthesis; (R)-pantothenate biosynthesis; beta-alanine from L-aspartate: step 1/1. Its function is as follows. Catalyzes the pyruvoyl-dependent decarboxylation of aspartate to produce beta-alanine. This chain is Aspartate 1-decarboxylase, found in Erwinia tasmaniensis (strain DSM 17950 / CFBP 7177 / CIP 109463 / NCPPB 4357 / Et1/99).